Reading from the N-terminus, the 268-residue chain is 4-hydroxy-tetrahydrodipicolinate reductase (268 aa).

Residues 8–13 (GAAGRM) and Glu34 each bind NAD(+). Arg35 provides a ligand contact to NADP(+). NAD(+)-binding positions include 96 to 98 (GST) and 120 to 123 (SPNM). The active-site Proton donor/acceptor is His153. His154 provides a ligand contact to (S)-2,3,4,5-tetrahydrodipicolinate. The Proton donor role is filled by Lys157. 163-164 (GT) lines the (S)-2,3,4,5-tetrahydrodipicolinate pocket.

It belongs to the DapB family.

It localises to the cytoplasm. It catalyses the reaction (S)-2,3,4,5-tetrahydrodipicolinate + NAD(+) + H2O = (2S,4S)-4-hydroxy-2,3,4,5-tetrahydrodipicolinate + NADH + H(+). It carries out the reaction (S)-2,3,4,5-tetrahydrodipicolinate + NADP(+) + H2O = (2S,4S)-4-hydroxy-2,3,4,5-tetrahydrodipicolinate + NADPH + H(+). Its pathway is amino-acid biosynthesis; L-lysine biosynthesis via DAP pathway; (S)-tetrahydrodipicolinate from L-aspartate: step 4/4. In terms of biological role, catalyzes the conversion of 4-hydroxy-tetrahydrodipicolinate (HTPA) to tetrahydrodipicolinate. In Anaeromyxobacter sp. (strain Fw109-5), this protein is 4-hydroxy-tetrahydrodipicolinate reductase.